Consider the following 106-residue polypeptide: CRISPR-associated endoribonuclease Cas2 (106 aa).

A Mg(2+)-binding site is contributed by Asp-8. A disordered region spans residues 86-106 (EEAAEAAVSYPGRSRKKARAG).

It belongs to the CRISPR-associated endoribonuclease Cas2 protein family. As to quaternary structure, homodimer, forms a heterotetramer with a Cas1 homodimer. The cofactor is Mg(2+).

In terms of biological role, CRISPR (clustered regularly interspaced short palindromic repeat), is an adaptive immune system that provides protection against mobile genetic elements (viruses, transposable elements and conjugative plasmids). CRISPR clusters contain sequences complementary to antecedent mobile elements and target invading nucleic acids. CRISPR clusters are transcribed and processed into CRISPR RNA (crRNA). Functions as a ssRNA-specific endoribonuclease. Involved in the integration of spacer DNA into the CRISPR cassette. In Desulforudis audaxviator (strain MP104C), this protein is CRISPR-associated endoribonuclease Cas2.